The sequence spans 233 residues: Uracil-DNA glycosylase (233 aa).

Aspartate 70 (proton acceptor) is an active-site residue.

This sequence belongs to the uracil-DNA glycosylase (UDG) superfamily. UNG family.

The protein resides in the cytoplasm. The enzyme catalyses Hydrolyzes single-stranded DNA or mismatched double-stranded DNA and polynucleotides, releasing free uracil.. In terms of biological role, excises uracil residues from the DNA which can arise as a result of misincorporation of dUMP residues by DNA polymerase or due to deamination of cytosine. The polypeptide is Uracil-DNA glycosylase (Oleidesulfovibrio alaskensis (strain ATCC BAA-1058 / DSM 17464 / G20) (Desulfovibrio alaskensis)).